The primary structure comprises 278 residues: MSQKLPPLKIYTSQLPLVSHKNMLENEEEASHSQLFTPCPVPPSFPKASKPNSNQPYPNGPVCIYPPNIYLYAKPTMPIIQSFDVVINVAKEVLHPFRTDGRHYRDSKHNLDIQVFDHIEYVHIHWDHDTQFALELDKLVSFVAYNAMQLNKKVLINCQMGISRSACLMIAFIMKTLNLNVSDAYEYVKERSPWIGPNMSLIFQLSEYQQIIRKNSSQGPYQSSSLKQSKRKSEGNLLFPEKPHSAQLPLVSPSTSESSMFTNLRRTRSSGSISNDAS.

One can recognise a Tyrosine-protein phosphatase domain in the interval Gly60–Lys214. Cys158 (phosphocysteine intermediate) is an active-site residue. A disordered region spans residues Ser217 to Ser278. Over residues Ser252 to Ser278 the composition is skewed to polar residues.

Belongs to the protein-tyrosine phosphatase family. Non-receptor class dual specificity subfamily.

The catalysed reaction is O-phospho-L-tyrosyl-[protein] + H2O = L-tyrosyl-[protein] + phosphate. Dual specificity phosphatase that dephosphorylates MAP kinase pmk1 on a Tyr. Has a role in chloride ion homeostasis by inactivating this pmk1 MAP kinase pathway. The sequence is that of Tyrosine-protein phosphatase pmp1 (pmp1) from Schizosaccharomyces pombe (strain 972 / ATCC 24843) (Fission yeast).